A 450-amino-acid polypeptide reads, in one-letter code: Phosphoglucosamine mutase (450 aa).

The active-site Phosphoserine intermediate is the serine 101. Mg(2+) contacts are provided by serine 101, aspartate 242, aspartate 244, and aspartate 246. A Phosphoserine modification is found at serine 101.

This sequence belongs to the phosphohexose mutase family. Mg(2+) serves as cofactor. Post-translationally, activated by phosphorylation.

It carries out the reaction alpha-D-glucosamine 1-phosphate = D-glucosamine 6-phosphate. Catalyzes the conversion of glucosamine-6-phosphate to glucosamine-1-phosphate. This is Phosphoglucosamine mutase from Rhodopseudomonas palustris (strain BisB5).